Consider the following 319-residue polypeptide: tRNA uridine(34) hydroxylase (319 aa).

One can recognise a Rhodanese domain in the interval 127–221 (KQEDTVIIDA…YGKDPEVQGE (95 aa)). Catalysis depends on Cys-181, which acts as the Cysteine persulfide intermediate.

The protein belongs to the TrhO family.

The enzyme catalyses uridine(34) in tRNA + AH2 + O2 = 5-hydroxyuridine(34) in tRNA + A + H2O. Its function is as follows. Catalyzes oxygen-dependent 5-hydroxyuridine (ho5U) modification at position 34 in tRNAs. This chain is tRNA uridine(34) hydroxylase, found in Bacillus cereus (strain G9842).